We begin with the raw amino-acid sequence, 741 residues long: Phosphoribosylformylglycinamidine synthase subunit PurL (741 aa).

Residue H53 is part of the active site. 2 residues coordinate ATP: Y56 and K95. E97 serves as a coordination point for Mg(2+). Residues 98 to 101 (SHNH) and R120 each bind substrate. The active-site Proton acceptor is H99. D121 contributes to the Mg(2+) binding site. Substrate is bound at residue Q244. Residue D274 participates in Mg(2+) binding. 318-320 (ESQ) contributes to the substrate binding site. Residues D501 and G538 each contribute to the ATP site. N539 contributes to the Mg(2+) binding site. Position 541 (S541) interacts with substrate.

The protein belongs to the FGAMS family. Monomer. Part of the FGAM synthase complex composed of 1 PurL, 1 PurQ and 2 PurS subunits.

The protein localises to the cytoplasm. It carries out the reaction N(2)-formyl-N(1)-(5-phospho-beta-D-ribosyl)glycinamide + L-glutamine + ATP + H2O = 2-formamido-N(1)-(5-O-phospho-beta-D-ribosyl)acetamidine + L-glutamate + ADP + phosphate + H(+). Its pathway is purine metabolism; IMP biosynthesis via de novo pathway; 5-amino-1-(5-phospho-D-ribosyl)imidazole from N(2)-formyl-N(1)-(5-phospho-D-ribosyl)glycinamide: step 1/2. Part of the phosphoribosylformylglycinamidine synthase complex involved in the purines biosynthetic pathway. Catalyzes the ATP-dependent conversion of formylglycinamide ribonucleotide (FGAR) and glutamine to yield formylglycinamidine ribonucleotide (FGAM) and glutamate. The FGAM synthase complex is composed of three subunits. PurQ produces an ammonia molecule by converting glutamine to glutamate. PurL transfers the ammonia molecule to FGAR to form FGAM in an ATP-dependent manner. PurS interacts with PurQ and PurL and is thought to assist in the transfer of the ammonia molecule from PurQ to PurL. This Latilactobacillus sakei subsp. sakei (strain 23K) (Lactobacillus sakei subsp. sakei) protein is Phosphoribosylformylglycinamidine synthase subunit PurL.